The primary structure comprises 582 residues: Arginine--tRNA ligase (582 aa).

The short motif at 127 to 137 (PNLAKEMHVGH) is the 'HIGH' region element.

This sequence belongs to the class-I aminoacyl-tRNA synthetase family. Monomer.

The protein localises to the cytoplasm. It carries out the reaction tRNA(Arg) + L-arginine + ATP = L-arginyl-tRNA(Arg) + AMP + diphosphate. The protein is Arginine--tRNA ligase of Psychromonas ingrahamii (strain DSM 17664 / CCUG 51855 / 37).